Here is a 312-residue protein sequence, read N- to C-terminus: Olfactory receptor-like protein COR6 (312 aa).

At 1 to 26 (MASGNCTTPTTFILSGLTDNPGLQMP) the chain is on the extracellular side. Asn-5 is a glycosylation site (N-linked (GlcNAc...) asparagine). The helical transmembrane segment at 27-49 (LFMVFLAIYTITLLTNLGLIALI) threads the bilayer. The Cytoplasmic portion of the chain corresponds to 50–57 (SIDLQLQT). Residues 58-79 (PMYIFLQNLSFTDAVYSTVITP) form a helical membrane-spanning segment. At 80–100 (KMLATFLEETKTISYVGCILQ) the chain is on the extracellular side. Cys-97 and Cys-179 form a disulfide bridge. The helical transmembrane segment at 101–120 (YFSFVLLTVRECLLLAVMAY) threads the bilayer. Residues 121–139 (DRYAAICKPLLYPAIMTKA) are Cytoplasmic-facing. Residues 140 to 164 (VCWRLVKGLYSLAFLNFLVHTSGLL) traverse the membrane as a helical segment. The Extracellular portion of the chain corresponds to 165-205 (KLSFCSSNVVNHFFCDNSPLFQISSSSTALNELLVFIFGSL). The chain crosses the membrane as a helical span at residues 206 to 226 (FVMSSIITILISYVFIILTVV). The Cytoplasmic segment spans residues 227–239 (RIRSKERKYKAFS). Residues 240–260 (TCTSHLMAVSLFHGTIVFMYF) traverse the membrane as a helical segment. The Extracellular segment spans residues 261-271 (QPANNFSLDKD). Residues 272-292 (KIMSLFYTVVIPMLNPLIYSW) traverse the membrane as a helical segment. Residues 293–312 (RNKEVKDALHRAIATAVLFH) are Cytoplasmic-facing.

The protein belongs to the G-protein coupled receptor 1 family.

The protein resides in the cell membrane. Odorant receptor. The chain is Olfactory receptor-like protein COR6 (COR6) from Gallus gallus (Chicken).